The following is a 472-amino-acid chain: Uronate isomerase (472 aa).

Belongs to the metallo-dependent hydrolases superfamily. Uronate isomerase family.

The catalysed reaction is D-glucuronate = D-fructuronate. It carries out the reaction aldehydo-D-galacturonate = keto-D-tagaturonate. It functions in the pathway carbohydrate metabolism; pentose and glucuronate interconversion. This chain is Uronate isomerase, found in Shouchella clausii (strain KSM-K16) (Alkalihalobacillus clausii).